The following is a 485-amino-acid chain: RAC-beta serine/threonine-protein kinase B (485 aa).

The PH domain occupies 5–109 (MVIKEGWLQK…WIIAIQTVAN (105 aa)). O-linked (GlcNAc) serine glycosylation is found at Ser-132 and Ser-135. One can recognise a Protein kinase domain in the interval 156-413 (FDYLKLLGKG…AQEVMSHGFF (258 aa)). Residues 162–170 (LGKGTFGKV) and Lys-185 each bind ATP. The Proton acceptor role is filled by Asp-279. O-linked (GlcNAc) threonine glycosylation is present at Thr-310. Phosphothreonine is present on Thr-313. The O-linked (GlcNAc) threonine glycan is linked to Thr-317. The AGC-kinase C-terminal domain maps to 414-485 (ASINWQDVTE…QFSYSSSIRE (72 aa)). A disordered region spans residues 454–485 (LTPPDRYDNLDALESEQRPHFPQFSYSSSIRE). Positions 458-472 (DRYDNLDALESEQRP) are enriched in basic and acidic residues. Position 478 is a phosphoserine (Ser-478). O-linked (GlcNAc) serine; alternate glycosylation is present at Ser-478.

It belongs to the protein kinase superfamily. AGC Ser/Thr protein kinase family. RAC subfamily. Phosphorylation on Thr-313 and Ser-478 is required for full activity. Phosphorylation of the activation loop at Thr-313 by PDPK1/PDK1 is a prerequisite for full activation. Phosphorylation by mTORC2 at Ser-478 in response to growth factors plays a key role in AKT1 activation by facilitating subsequent phosphorylation of the activation loop by PDPK1/PDK1.

The catalysed reaction is L-seryl-[protein] + ATP = O-phospho-L-seryl-[protein] + ADP + H(+). It catalyses the reaction L-threonyl-[protein] + ATP = O-phospho-L-threonyl-[protein] + ADP + H(+). With respect to regulation, two specific sites, one in the kinase domain (Thr-313) and the other in the C-terminal regulatory region (Ser-478), need to be phosphorylated for its full activation. Akt2-b is one of several closely related serine/threonine-protein kinases known as the AKT kinase, and which regulate many processes including metabolism, proliferation, cell survival, growth and angiogenesis. This is mediated through serine and/or threonine phosphorylation of a range of downstream substrates. Over 100 substrate candidates have been reported so far, but for most of them, no isoform specificity has been reported. May be involved in the inhibition of ciliogenesis. This Xenopus laevis (African clawed frog) protein is RAC-beta serine/threonine-protein kinase B (akt2-b).